A 192-amino-acid polypeptide reads, in one-letter code: Shikimate kinase (192 aa).

27–32 (GTGKTT) serves as a coordination point for ATP. Thr31 contacts Mg(2+). Substrate contacts are provided by Asp49, Arg73, and Gly95. Arg133 is a binding site for ATP. Arg152 serves as a coordination point for substrate.

It belongs to the shikimate kinase family. As to quaternary structure, monomer. Mg(2+) serves as cofactor.

Its subcellular location is the cytoplasm. It carries out the reaction shikimate + ATP = 3-phosphoshikimate + ADP + H(+). It participates in metabolic intermediate biosynthesis; chorismate biosynthesis; chorismate from D-erythrose 4-phosphate and phosphoenolpyruvate: step 5/7. Its function is as follows. Catalyzes the specific phosphorylation of the 3-hydroxyl group of shikimic acid using ATP as a cosubstrate. The chain is Shikimate kinase from Hahella chejuensis (strain KCTC 2396).